Consider the following 190-residue polypeptide: Holliday junction branch migration complex subunit RuvA (190 aa).

A domain I region spans residues 1 to 64 (MIGSLTGIIE…DNLTQLYGFL (64 aa)). Residues 65-142 (DKQEQDYMRM…KMPIEETLII (78 aa)) form a domain II region. Residue Lys-143 is a region of interest, flexible linker. The domain III stretch occupies residues 143–190 (KEDDSLAALISLGYDKLKAFNAIQEIKSDFPNANIQEIIRKALQKLSQ).

This sequence belongs to the RuvA family. In terms of assembly, homotetramer. Forms an RuvA(8)-RuvB(12)-Holliday junction (HJ) complex. HJ DNA is sandwiched between 2 RuvA tetramers; dsDNA enters through RuvA and exits via RuvB. An RuvB hexamer assembles on each DNA strand where it exits the tetramer. Each RuvB hexamer is contacted by two RuvA subunits (via domain III) on 2 adjacent RuvB subunits; this complex drives branch migration. In the full resolvosome a probable DNA-RuvA(4)-RuvB(12)-RuvC(2) complex forms which resolves the HJ.

Its subcellular location is the cytoplasm. In terms of biological role, the RuvA-RuvB-RuvC complex processes Holliday junction (HJ) DNA during genetic recombination and DNA repair, while the RuvA-RuvB complex plays an important role in the rescue of blocked DNA replication forks via replication fork reversal (RFR). RuvA specifically binds to HJ cruciform DNA, conferring on it an open structure. The RuvB hexamer acts as an ATP-dependent pump, pulling dsDNA into and through the RuvAB complex. HJ branch migration allows RuvC to scan DNA until it finds its consensus sequence, where it cleaves and resolves the cruciform DNA. This chain is Holliday junction branch migration complex subunit RuvA, found in Ehrlichia canis (strain Jake).